A 401-amino-acid chain; its full sequence is S-adenosylmethionine synthase (401 aa).

An ATP-binding site is contributed by His-16. Mg(2+) is bound at residue Asp-18. Residue Glu-44 participates in K(+) binding. L-methionine-binding residues include Glu-57 and Gln-109. Residues 109 to 119 (QSAHIAQGVDA) are flexible loop. Residues 174–176 (DAK), Asp-251, 257–258 (RK), Ala-274, and Lys-278 contribute to the ATP site. Asp-251 contributes to the L-methionine binding site. Residue Lys-282 participates in L-methionine binding.

This sequence belongs to the AdoMet synthase family. In terms of assembly, homotetramer; dimer of dimers. Mg(2+) serves as cofactor. The cofactor is K(+).

The protein localises to the cytoplasm. It catalyses the reaction L-methionine + ATP + H2O = S-adenosyl-L-methionine + phosphate + diphosphate. It participates in amino-acid biosynthesis; S-adenosyl-L-methionine biosynthesis; S-adenosyl-L-methionine from L-methionine: step 1/1. Catalyzes the formation of S-adenosylmethionine (AdoMet) from methionine and ATP. The overall synthetic reaction is composed of two sequential steps, AdoMet formation and the subsequent tripolyphosphate hydrolysis which occurs prior to release of AdoMet from the enzyme. The chain is S-adenosylmethionine synthase from Novosphingobium aromaticivorans (strain ATCC 700278 / DSM 12444 / CCUG 56034 / CIP 105152 / NBRC 16084 / F199).